A 90-amino-acid chain; its full sequence is Chromosomal protein MC1c (90 aa).

Functionally, protects DNA against thermal denaturation and modulates transcription. In Methanothrix soehngenii (Methanosaeta concilii), this protein is Chromosomal protein MC1c.